The sequence spans 809 residues: Lon protease (809 aa).

The 196-residue stretch at 8–203 folds into the Lon N-terminal domain; it reads LPVVALRNMA…RLCLILADEI (196 aa). Position 354-361 (354-361) interacts with ATP; the sequence is GPPGTGKT. Positions 629-809 constitute a Lon proteolytic domain; that stretch reads KDEVGIVCGL…MDEVLKHALV (181 aa). Catalysis depends on residues Ser716 and Lys759.

Belongs to the peptidase S16 family. As to quaternary structure, homohexamer. Organized in a ring with a central cavity.

Its subcellular location is the cytoplasm. The catalysed reaction is Hydrolysis of proteins in presence of ATP.. In terms of biological role, ATP-dependent serine protease that mediates the selective degradation of mutant and abnormal proteins as well as certain short-lived regulatory proteins. Required for cellular homeostasis and for survival from DNA damage and developmental changes induced by stress. Degrades polypeptides processively to yield small peptide fragments that are 5 to 10 amino acids long. Binds to DNA in a double-stranded, site-specific manner. The protein is Lon protease of Lachnoclostridium phytofermentans (strain ATCC 700394 / DSM 18823 / ISDg) (Clostridium phytofermentans).